The sequence spans 106 residues: MKYLAAYLLASLSGNANAASVTKILQSVGVEVDAARVESVCKELDGKDVQALIAAGKSKVGSVAAAAAPAAATSAAPAAAAAAPAKKVVEEKKEESDDDMGMGLFD.

The disordered stretch occupies residues 80–106; that stretch reads AAAAPAKKVVEEKKEESDDDMGMGLFD.

The protein belongs to the eukaryotic ribosomal protein P1/P2 family. In terms of assembly, P1 and P2 exist as dimers at the large ribosomal subunit. In terms of processing, phosphorylated.

Plays an important role in the elongation step of protein synthesis. The chain is Large ribosomal subunit protein P2 (rplp2) from Dictyostelium discoideum (Social amoeba).